A 256-amino-acid polypeptide reads, in one-letter code: Glutamate racemase (256 aa).

Residues 12–13 and 44–45 contribute to the substrate site; these read DS and YG. The active-site Proton donor/acceptor is Cys75. 76-77 lines the substrate pocket; that stretch reads NT. The active-site Proton donor/acceptor is Cys186. 187-188 provides a ligand contact to substrate; the sequence is TH.

The protein belongs to the aspartate/glutamate racemases family.

The enzyme catalyses L-glutamate = D-glutamate. The protein operates within cell wall biogenesis; peptidoglycan biosynthesis. Provides the (R)-glutamate required for cell wall biosynthesis. In Clostridium acetobutylicum (strain ATCC 824 / DSM 792 / JCM 1419 / IAM 19013 / LMG 5710 / NBRC 13948 / NRRL B-527 / VKM B-1787 / 2291 / W), this protein is Glutamate racemase.